A 384-amino-acid polypeptide reads, in one-letter code: 5-amino-6-(D-ribitylamino)uracil--L-tyrosine 4-hydroxyphenyl transferase 2 (384 aa).

The Radical SAM core domain maps to 53-286; that stretch reads VSYVVNRNIY…IAISRVILHT (234 aa). Residues Cys-67, Cys-71, and Cys-74 each contribute to the [4Fe-4S] cluster site.

The protein belongs to the radical SAM superfamily. CofH family. As to quaternary structure, consists of two subunits, CofG and CofH. [4Fe-4S] cluster serves as cofactor.

It catalyses the reaction 5-amino-6-(D-ribitylamino)uracil + L-tyrosine + S-adenosyl-L-methionine = 5-amino-5-(4-hydroxybenzyl)-6-(D-ribitylimino)-5,6-dihydrouracil + 2-iminoacetate + 5'-deoxyadenosine + L-methionine + H(+). It participates in cofactor biosynthesis; coenzyme F0 biosynthesis. Its function is as follows. Catalyzes the radical-mediated synthesis of 5-amino-5-(4-hydroxybenzyl)-6-(D-ribitylimino)-5,6-dihydrouracil from 5-amino-6-(D-ribitylamino)uracil and L-tyrosine. The sequence is that of 5-amino-6-(D-ribitylamino)uracil--L-tyrosine 4-hydroxyphenyl transferase 2 from Methanosarcina mazei (strain ATCC BAA-159 / DSM 3647 / Goe1 / Go1 / JCM 11833 / OCM 88) (Methanosarcina frisia).